A 292-amino-acid polypeptide reads, in one-letter code: MNERYQLNKNLAQMLKGGVIMDVVNAKEAEIAQKAGAVAVMALERVPSDIRKAGGVARMSDPKMIKDIQSAVSIPVMAKVRIGHFVEAQVLEALSIDYIDESEVLTPADEEFHIDKHTFKVPFVCGAKNLGEALRRISEGASMIRTKGEAGTGNVVEAVRHMRTVTNEIRKVQSASKQELMTIAKEFGAPYDLILYVHENGKLPVINFAAGGIATPADAALMMQLGCDGVFVGSGIFKSSDPAKRAKAIVKATTYYNDPQIIAEVSEELGTAMDSIDVRELTGNSLYASRGW.

Asp-22 contributes to the D-ribose 5-phosphate binding site. Lys-79 serves as the catalytic Schiff-base intermediate with D-ribose 5-phosphate. Gly-151 provides a ligand contact to D-ribose 5-phosphate. Arg-163 provides a ligand contact to D-glyceraldehyde 3-phosphate. D-ribose 5-phosphate-binding positions include Gly-212 and 233–234; that span reads GS.

The protein belongs to the PdxS/SNZ family. In terms of assembly, in the presence of PdxT, forms a dodecamer of heterodimers.

The enzyme catalyses aldehydo-D-ribose 5-phosphate + D-glyceraldehyde 3-phosphate + L-glutamine = pyridoxal 5'-phosphate + L-glutamate + phosphate + 3 H2O + H(+). It participates in cofactor biosynthesis; pyridoxal 5'-phosphate biosynthesis. Functionally, catalyzes the formation of pyridoxal 5'-phosphate from ribose 5-phosphate (RBP), glyceraldehyde 3-phosphate (G3P) and ammonia. The ammonia is provided by the PdxT subunit. Can also use ribulose 5-phosphate and dihydroxyacetone phosphate as substrates, resulting from enzyme-catalyzed isomerization of RBP and G3P, respectively. The polypeptide is Pyridoxal 5'-phosphate synthase subunit PdxS (Ruminiclostridium cellulolyticum (strain ATCC 35319 / DSM 5812 / JCM 6584 / H10) (Clostridium cellulolyticum)).